A 299-amino-acid chain; its full sequence is ATP phosphoribosyltransferase (299 aa).

It belongs to the ATP phosphoribosyltransferase family. Long subfamily. Requires Mg(2+) as cofactor.

The protein localises to the cytoplasm. It catalyses the reaction 1-(5-phospho-beta-D-ribosyl)-ATP + diphosphate = 5-phospho-alpha-D-ribose 1-diphosphate + ATP. It participates in amino-acid biosynthesis; L-histidine biosynthesis; L-histidine from 5-phospho-alpha-D-ribose 1-diphosphate: step 1/9. Feedback inhibited by histidine. Its function is as follows. Catalyzes the condensation of ATP and 5-phosphoribose 1-diphosphate to form N'-(5'-phosphoribosyl)-ATP (PR-ATP). Has a crucial role in the pathway because the rate of histidine biosynthesis seems to be controlled primarily by regulation of HisG enzymatic activity. The polypeptide is ATP phosphoribosyltransferase (Actinobacillus pleuropneumoniae serotype 5b (strain L20)).